Here is a 37-residue protein sequence, read N- to C-terminus: Large ribosomal subunit protein bL36c (37 aa).

This sequence belongs to the bacterial ribosomal protein bL36 family.

It is found in the plastid. The protein resides in the chloroplast. The sequence is that of Large ribosomal subunit protein bL36c (rpl36) from Chlorella vulgaris (Green alga).